The sequence spans 417 residues: Serine hydroxymethyltransferase (417 aa).

(6S)-5,6,7,8-tetrahydrofolate is bound by residues L121 and 125-127 (GHL). K229 bears the N6-(pyridoxal phosphate)lysine mark. (6S)-5,6,7,8-tetrahydrofolate is bound at residue 354-356 (SPF).

This sequence belongs to the SHMT family. In terms of assembly, homodimer. The cofactor is pyridoxal 5'-phosphate.

The protein resides in the cytoplasm. It catalyses the reaction (6R)-5,10-methylene-5,6,7,8-tetrahydrofolate + glycine + H2O = (6S)-5,6,7,8-tetrahydrofolate + L-serine. Its pathway is one-carbon metabolism; tetrahydrofolate interconversion. It participates in amino-acid biosynthesis; glycine biosynthesis; glycine from L-serine: step 1/1. Catalyzes the reversible interconversion of serine and glycine with tetrahydrofolate (THF) serving as the one-carbon carrier. This reaction serves as the major source of one-carbon groups required for the biosynthesis of purines, thymidylate, methionine, and other important biomolecules. Also exhibits THF-independent aldolase activity toward beta-hydroxyamino acids, producing glycine and aldehydes, via a retro-aldol mechanism. This is Serine hydroxymethyltransferase from Stutzerimonas stutzeri (strain A1501) (Pseudomonas stutzeri).